The primary structure comprises 103 residues: Large ribosomal subunit protein uL24 (103 aa).

This sequence belongs to the universal ribosomal protein uL24 family. In terms of assembly, part of the 50S ribosomal subunit.

One of two assembly initiator proteins, it binds directly to the 5'-end of the 23S rRNA, where it nucleates assembly of the 50S subunit. Its function is as follows. One of the proteins that surrounds the polypeptide exit tunnel on the outside of the subunit. The sequence is that of Large ribosomal subunit protein uL24 from Brucella abortus (strain S19).